We begin with the raw amino-acid sequence, 429 residues long: Ribosomal RNA small subunit methyltransferase B (429 aa).

Residues 254–260 (CAAPGGK), D277, D303, and D322 contribute to the S-adenosyl-L-methionine site. C375 (nucleophile) is an active-site residue.

The protein belongs to the class I-like SAM-binding methyltransferase superfamily. RsmB/NOP family.

It localises to the cytoplasm. The catalysed reaction is cytidine(967) in 16S rRNA + S-adenosyl-L-methionine = 5-methylcytidine(967) in 16S rRNA + S-adenosyl-L-homocysteine + H(+). Its function is as follows. Specifically methylates the cytosine at position 967 (m5C967) of 16S rRNA. The polypeptide is Ribosomal RNA small subunit methyltransferase B (Salmonella arizonae (strain ATCC BAA-731 / CDC346-86 / RSK2980)).